We begin with the raw amino-acid sequence, 480 residues long: Aspartyl/glutamyl-tRNA(Asn/Gln) amidotransferase subunit B (480 aa).

The protein belongs to the GatB/GatE family. GatB subfamily. Heterotrimer of A, B and C subunits.

The enzyme catalyses L-glutamyl-tRNA(Gln) + L-glutamine + ATP + H2O = L-glutaminyl-tRNA(Gln) + L-glutamate + ADP + phosphate + H(+). It carries out the reaction L-aspartyl-tRNA(Asn) + L-glutamine + ATP + H2O = L-asparaginyl-tRNA(Asn) + L-glutamate + ADP + phosphate + 2 H(+). Allows the formation of correctly charged Asn-tRNA(Asn) or Gln-tRNA(Gln) through the transamidation of misacylated Asp-tRNA(Asn) or Glu-tRNA(Gln) in organisms which lack either or both of asparaginyl-tRNA or glutaminyl-tRNA synthetases. The reaction takes place in the presence of glutamine and ATP through an activated phospho-Asp-tRNA(Asn) or phospho-Glu-tRNA(Gln). The protein is Aspartyl/glutamyl-tRNA(Asn/Gln) amidotransferase subunit B of Streptococcus pneumoniae serotype 19F (strain G54).